Consider the following 274-residue polypeptide: Photosystem II extrinsic protein O (274 aa).

Positions 1–28 (MRFRPSIVALLSVCFGLLTFLYSGSAFA) are cleaved as a signal peptide.

Belongs to the PsbO family. As to quaternary structure, PSII is composed of 1 copy each of membrane proteins PsbA, PsbB, PsbC, PsbD, PsbE, PsbF, PsbH, PsbI, PsbJ, PsbK, PsbL, PsbM, PsbT, PsbX, PsbY, PsbZ, Psb30/Ycf12, peripheral proteins PsbO, CyanoQ (PsbQ), PsbU, PsbV and a large number of cofactors. It forms dimeric complexes. Contacts PsbQ.

The protein resides in the cellular thylakoid membrane. One of the extrinsic, lumenal subunits of photosystem II (PSII), which stabilize and protect the oxygen-evolving complex. PSII is a light-driven water plastoquinone oxidoreductase, using light energy to abstract electrons from H(2)O, generating a proton gradient subsequently used for ATP formation. Required for dimerization of PSII and for binding of PsbQ to PSII. This is Photosystem II extrinsic protein O from Synechocystis sp. (strain ATCC 27184 / PCC 6803 / Kazusa).